The primary structure comprises 588 residues: Protein cereblon (588 aa).

2 disordered regions span residues 1–107 (MDDE…DDSD) and 159–197 (QERRRSRTSEETSQEAADAEQPNDPPPQQPPRPPIDIGF). The segment covering 41 to 50 (AWNNATQDEQ) has biased composition (polar residues). The segment covering 75–85 (MVEDVLQDDTA) has biased composition (acidic residues). Residues 86-96 (SEGSHPSSDMS) are compositionally biased toward polar residues. Over residues 159 to 168 (QERRRSRTSE) the composition is skewed to basic and acidic residues. The span at 181-192 (NDPPPQQPPRPP) shows a compositional bias: pro residues. The region spanning 228-454 (HMLIFLHQHI…LIKSTFKDES (227 aa)) is the Lon N-terminal domain. In terms of domain architecture, CULT spans 453–562 (ESLFFCRYCN…LAGSSVRIGK (110 aa)). Zn(2+)-binding residues include cysteine 458, cysteine 461, cysteine 527, and cysteine 530.

It belongs to the CRBN family. Likely a component of a DCX (DDB1-CUL4-X-box) protein ligase complex. May interact with pic/DDB1. Post-translationally, ubiquitinated.

It localises to the nucleus. It functions in the pathway protein modification; protein ubiquitination. Substrate recognition component of a DCX (DDB1-CUL4-X-box) E3 protein ligase complex that mediates the ubiquitination and subsequent proteasomal degradation of target proteins. Has an essential role in mediating growth by negatively regulating insulin signaling. It also has a role in maintaining presynaptic function in the neuromuscular junction synapses of third-instar larvae. This Drosophila yakuba (Fruit fly) protein is Protein cereblon.